The primary structure comprises 250 residues: uncharacterized protein (250 aa).

The protein belongs to the glycosyltransferase 2 family.

This is an uncharacterized protein from Haemophilus influenzae (strain ATCC 51907 / DSM 11121 / KW20 / Rd).